Here is a 307-residue protein sequence, read N- to C-terminus: Formate hydrogenlyase subunit 4 (307 aa).

At 1–2 (MS) the chain is on the periplasmic side. The chain crosses the membrane as a helical span at residues 3 to 23 (VLYPLIQALVLFAVAPLLSGI). Topologically, residues 24 to 67 (TRVARARLHNRRGPGVLQEYRDIIKLLGRQSVGPDASGWVFRLT) are cytoplasmic. Residues 68 to 88 (PYVMVGVMLTIATALPVVTVG) form a helical membrane-spanning segment. The Periplasmic segment spans residues 89–93 (SPLPQ). A helical membrane pass occupies residues 94-114 (LGDLITLLYLFAIARFFFAIS). Over 115–131 (GLDTGSPFTAIGASREA) the chain is Cytoplasmic. The chain crosses the membrane as a helical span at residues 132 to 152 (MLGVLVEPMLLLGLWVAAQVA). At 153 to 167 (GSTNISNITDTVYHW) the chain is on the periplasmic side. The chain crosses the membrane as a helical span at residues 168–188 (PLSQSIPLVLALCACAFATFI). The Cytoplasmic segment spans residues 189-221 (EMGKLPFDLAEAEQELQEGPLSEYSGSGFGVMK). A helical transmembrane segment spans residues 222 to 242 (WGISLKQLVVLQMFVGVFIPW). At 243–253 (GQMETFTAGGL) the chain is on the periplasmic side. Residues 254 to 274 (LLALVIAIVKLVVGVLVIALF) traverse the membrane as a helical segment. The Cytoplasmic segment spans residues 275-284 (ENSMARLRLD). A helical transmembrane segment spans residues 285 to 305 (ITPRITWAGFGFAFLAFVSLL). At 306–307 (AA) the chain is on the periplasmic side.

This sequence belongs to the complex I subunit 1 family. In terms of assembly, FHL comprises of a formate dehydrogenase, unidentified electron carriers and a hydrogenase (isoenzyme 3). In this non-energy conserving pathway molecular hydrogen and carbodioxide from formate are released.

It is found in the cell inner membrane. This is Formate hydrogenlyase subunit 4 (hycD) from Escherichia coli (strain K12).